We begin with the raw amino-acid sequence, 244 residues long: Lectin (244 aa).

Residues 1–20 form a disordered region; it reads TETETTSFSIPKTDQPSSPK.

This sequence belongs to the leguminous lectin family. In terms of assembly, homodimer. In contrast to other Lathyrus lectins which are tetramer of two alpha and two beta chains.

The protein is Lectin of Lathyrus sphaericus (Spring vetchling).